The chain runs to 263 residues: Diphthine synthase (263 aa).

Residues Leu-9, Asp-84, Met-87, 112–113, Leu-164, Ala-207, and His-232 each bind S-adenosyl-L-methionine; that span reads SI.

It belongs to the diphthine synthase family. Homodimer.

It catalyses the reaction 2-[(3S)-amino-3-carboxypropyl]-L-histidyl-[translation elongation factor 2] + 3 S-adenosyl-L-methionine = diphthine-[translation elongation factor 2] + 3 S-adenosyl-L-homocysteine + 3 H(+). The protein operates within protein modification; peptidyl-diphthamide biosynthesis. Functionally, S-adenosyl-L-methionine-dependent methyltransferase that catalyzes the trimethylation of the amino group of the modified target histidine residue in translation elongation factor 2 (EF-2), to form an intermediate called diphthine. The three successive methylation reactions represent the second step of diphthamide biosynthesis. The protein is Diphthine synthase of Methanosphaera stadtmanae (strain ATCC 43021 / DSM 3091 / JCM 11832 / MCB-3).